The following is a 261-amino-acid chain: G patch domain-containing protein 11 (261 aa).

Disordered stretches follow at residues 1-67, 88-124, and 184-213; these read MEEE…LNEA, ALGK…AEEN, and EAWY…LVEE. Composition is skewed to basic and acidic residues over residues 29–64 and 111–124; these read RVKE…DTKL and IGHE…AEEN. The stretch at 31–65 forms a coiled coil; the sequence is KECYEKEEKHKEANIKNRQQKLKDVEKEKRDTKLN. A G-patch domain is found at 70 to 116; the sequence is NENKGFALLQKMGYKKGQALGKKGDGIVEPIPLNIKTGRSGIGHEEM. Residues 190-222 are a coiled coil; that stretch reads KMNEQEADEEADEETEEDEDLVEEELSTLEKLQ. The segment covering 194–213 has biased composition (acidic residues); it reads QEADEEADEETEEDEDLVEE.

Belongs to the GPATCH11 family.

The protein localises to the chromosome. It is found in the centromere. The protein resides in the kinetochore. In Xenopus tropicalis (Western clawed frog), this protein is G patch domain-containing protein 11 (gpatch11).